We begin with the raw amino-acid sequence, 601 residues long: Glutathione-regulated potassium-efflux system protein KefB (601 aa).

Helical transmembrane passes span 4-24 (SDFL…VPLA), 29-49 (IGAV…GLGF), 55-75 (EILH…GLEL), 87-107 (IFGV…GLLM), 115-135 (AAVV…LQLM), 152-172 (VLLF…LLAG), 177-197 (HFDW…LIGG), 207-227 (FIAA…LVLG), 230-250 (LFMD…GVLL), 268-288 (GLLL…GVLY), 291-311 (LLWV…VLYL), 324-344 (MQFA…FSTA), and 356-376 (ALLL…MKLV). An RCK N-terminal domain is found at 400–519 (KPQVIVVGFG…AGVTQFSRET (120 aa)).

It belongs to the monovalent cation:proton antiporter 2 (CPA2) transporter (TC 2.A.37) family. KefB subfamily. Interacts with the regulatory subunit KefG.

Its subcellular location is the cell inner membrane. Its function is as follows. Pore-forming subunit of a potassium efflux system that confers protection against electrophiles. Catalyzes K(+)/H(+) antiport. The sequence is that of Glutathione-regulated potassium-efflux system protein KefB from Escherichia coli O17:K52:H18 (strain UMN026 / ExPEC).